Reading from the N-terminus, the 288-residue chain is Diaminopimelate epimerase (288 aa).

The substrate site is built by Asn13, Gln51, and Asn71. Cys80 (proton donor) is an active-site residue. Substrate contacts are provided by residues 81 to 82 (GN), Asn166, Asn200, and 218 to 219 (ER). Cys227 functions as the Proton acceptor in the catalytic mechanism. 228–229 (GT) contributes to the substrate binding site.

Belongs to the diaminopimelate epimerase family. Homodimer.

It is found in the cytoplasm. It carries out the reaction (2S,6S)-2,6-diaminopimelate = meso-2,6-diaminopimelate. Its pathway is amino-acid biosynthesis; L-lysine biosynthesis via DAP pathway; DL-2,6-diaminopimelate from LL-2,6-diaminopimelate: step 1/1. In terms of biological role, catalyzes the stereoinversion of LL-2,6-diaminopimelate (L,L-DAP) to meso-diaminopimelate (meso-DAP), a precursor of L-lysine and an essential component of the bacterial peptidoglycan. This Caulobacter vibrioides (strain ATCC 19089 / CIP 103742 / CB 15) (Caulobacter crescentus) protein is Diaminopimelate epimerase.